The primary structure comprises 432 residues: Alpha-2 adrenergic receptor (432 aa).

The Extracellular portion of the chain corresponds to 1–32 (MDPLNATGMDAFTAIHLNASWSADSGYSLAAI). N-linked (GlcNAc...) asparagine glycosylation is found at Asn5 and Asn18. Residues 33 to 57 (ASIAALVSFLILFTVVGNILVVIAV) form a helical membrane-spanning segment. Residues 58–69 (LTSRALKAPQNL) are Cytoplasmic-facing. The chain crosses the membrane as a helical span at residues 70–95 (FLVSLATADILVATLVMPFSLANELM). Over 96 to 105 (GYWYFGKVWC) the chain is Extracellular. An intrachain disulfide couples Cys105 to Cys183. The chain crosses the membrane as a helical span at residues 106–128 (GIYLALDVLFCTSSIVHLCAISL). Residues 129–149 (DRYWSVTQAVEYNLKRTPKRV) lie on the Cytoplasmic side of the membrane. The chain crosses the membrane as a helical span at residues 150–172 (KCIIVIVWLISAFISSPPLLSID). Residues 173 to 188 (SNNYISSQPQCMLNDD) lie on the Extracellular side of the membrane. The helical transmembrane segment at 189 to 212 (TWYILSSSMASFFAPCLIMILVYI) threads the bilayer. Residues 213–356 (RIYQVAKTRT…QAREKRFTFV (144 aa)) are Cytoplasmic-facing. Residues 222-319 (TRSMSGKEPR…SISKQSARIS (98 aa)) form a disordered region. Polar residues-rich tracts occupy residues 235 to 246 (VTQTENGLNKAN) and 265 to 275 (SQRTVTIGQQT). Residues 288–300 (GKGHKPQRQDSQR) are compositionally biased toward basic and acidic residues. Over residues 309–319 (SSISKQSARIS) the composition is skewed to polar residues. Residues 357–380 (LAVVMGVFVVCWFPFFFSYSLHAV) form a helical membrane-spanning segment. Residues 381 to 393 (CRDYCKIPDTLFK) lie on the Extracellular side of the membrane. Residues 394 to 413 (FFWIGYCNSSLNPAIYTIFN) form a helical membrane-spanning segment. Over 414–432 (RDFRRAFQKILCKSWKKSF) the chain is Cytoplasmic.

Belongs to the G-protein coupled receptor 1 family.

Its subcellular location is the cell membrane. Its function is as follows. Alpha-2 adrenergic receptors mediate the catecholamine-induced inhibition of adenylate cyclase through the action of G proteins. The polypeptide is Alpha-2 adrenergic receptor (Labrus ossifagus (Cuckoo wrasse)).